We begin with the raw amino-acid sequence, 154 residues long: UPF0039 protein sll0451 (154 aa).

Positions 8–151 constitute an N-acetyltransferase domain; sequence QRFNDISGEA…EHISMIFRVP (144 aa).

It belongs to the UPF0039 (ElaA) family.

This chain is UPF0039 protein sll0451, found in Synechocystis sp. (strain ATCC 27184 / PCC 6803 / Kazusa).